Here is a 284-residue protein sequence, read N- to C-terminus: Large ribosomal subunit protein uL2 (284 aa).

The segment at 232-284 (RGTAMNPVDHPHGGGEGRHNGYIPRTPWGKVTKGLKTRDKRKSNKWIVKDRRK) is disordered. Over residues 240–250 (DHPHGGGEGRH) the composition is skewed to basic and acidic residues. Positions 264 to 284 (KGLKTRDKRKSNKWIVKDRRK) are enriched in basic residues.

The protein belongs to the universal ribosomal protein uL2 family. Part of the 50S ribosomal subunit. Forms a bridge to the 30S subunit in the 70S ribosome.

One of the primary rRNA binding proteins. Required for association of the 30S and 50S subunits to form the 70S ribosome, for tRNA binding and peptide bond formation. It has been suggested to have peptidyltransferase activity; this is somewhat controversial. Makes several contacts with the 16S rRNA in the 70S ribosome. This is Large ribosomal subunit protein uL2 from Chlamydia felis (strain Fe/C-56) (Chlamydophila felis).